A 335-amino-acid polypeptide reads, in one-letter code: Peroxidase 2 (335 aa).

An N-terminal signal peptide occupies residues 1–29; that stretch reads MAAATAPKTMPSSVFAAALLLLAAAACQA. 4 disulfides stabilise this stretch: C44/C125, C77/C82, C131/C329, and C212/C238. H75 functions as the Proton acceptor in the catalytic mechanism. 5 residues coordinate Ca(2+): D76, V79, G81, D83, and S85. N-linked (GlcNAc...) asparagine glycans are attached at residues N166 and N180. H205 serves as a coordination point for heme b. T206 lines the Ca(2+) pocket. N-linked (GlcNAc...) asparagine glycosylation is present at N241. D253, T256, and D261 together coordinate Ca(2+).

The protein belongs to the peroxidase family. Classical plant (class III) peroxidase subfamily. Heme b is required as a cofactor. Ca(2+) serves as cofactor. Expressed in the elongating region of young roots, and in root vascular tissues and epidermis.

The protein resides in the secreted. The catalysed reaction is 2 a phenolic donor + H2O2 = 2 a phenolic radical donor + 2 H2O. In terms of biological role, removal of H(2)O(2), oxidation of toxic reductants, biosynthesis and degradation of lignin, suberization, auxin catabolism, response to environmental stresses such as wounding, pathogen attack and oxidative stress. These functions might be dependent on each isozyme/isoform in each plant tissue. This is Peroxidase 2 (PER2) from Zea mays (Maize).